The primary structure comprises 104 residues: ATP-dependent Clp protease adapter protein ClpS (104 aa).

The protein belongs to the ClpS family. Binds to the N-terminal domain of the chaperone ClpA.

In terms of biological role, involved in the modulation of the specificity of the ClpAP-mediated ATP-dependent protein degradation. The protein is ATP-dependent Clp protease adapter protein ClpS of Oleidesulfovibrio alaskensis (strain ATCC BAA-1058 / DSM 17464 / G20) (Desulfovibrio alaskensis).